Reading from the N-terminus, the 146-residue chain is Anti-sigma F factor (146 aa).

The protein belongs to the anti-sigma-factor family.

It catalyses the reaction L-seryl-[protein] + ATP = O-phospho-L-seryl-[protein] + ADP + H(+). The enzyme catalyses L-threonyl-[protein] + ATP = O-phospho-L-threonyl-[protein] + ADP + H(+). In terms of biological role, binds to sigma F and blocks its ability to form an RNA polymerase holoenzyme (E-sigma F). Phosphorylates SpoIIAA on a serine residue. This phosphorylation may enable SpoIIAA to act as an anti-anti-sigma factor that counteracts SpoIIAB and thus releases sigma F from inhibition. The polypeptide is Anti-sigma F factor (Geobacillus kaustophilus (strain HTA426)).